The primary structure comprises 228 residues: Cytochrome b-c1 complex subunit Rieske, mitochondrial (228 aa).

A mitochondrion-targeting transit peptide spans methionine 1–serine 26. Residues serine 27–aspartate 63 lie on the Mitochondrial matrix side of the membrane. The chain crosses the membrane as a helical span at residues arginine 64 to alanine 93. Topologically, residues serine 94–glycine 228 are mitochondrial intermembrane. The 89-residue stretch at isoleucine 139–isoleucine 227 folds into the Rieske domain. The [2Fe-2S] cluster site is built by cysteine 172, histidine 174, cysteine 191, and histidine 194. The cysteines at positions 177 and 193 are disulfide-linked.

This sequence belongs to the Rieske iron-sulfur protein family. In terms of assembly, component of the ubiquinol-cytochrome c oxidoreductase (cytochrome b-c1 complex, complex III, CIII), a multisubunit enzyme composed of 3 respiratory subunits cytochrome b, cytochrome c1 and Rieske protein, 2 core protein subunits, and additional low-molecular weight protein subunits. The complex exists as an obligatory dimer and forms supercomplexes (SCs) in the inner mitochondrial membrane with cytochrome c oxidase (complex IV, CIV). [2Fe-2S] cluster is required as a cofactor.

It is found in the mitochondrion inner membrane. It catalyses the reaction a quinol + 2 Fe(III)-[cytochrome c](out) = a quinone + 2 Fe(II)-[cytochrome c](out) + 2 H(+)(out). In terms of biological role, component of the ubiquinol-cytochrome c oxidoreductase, a multisubunit transmembrane complex that is part of the mitochondrial electron transport chain which drives oxidative phosphorylation. The respiratory chain contains 3 multisubunit complexes succinate dehydrogenase (complex II, CII), ubiquinol-cytochrome c oxidoreductase (cytochrome b-c1 complex, complex III, CIII) and cytochrome c oxidase (complex IV, CIV), that cooperate to transfer electrons derived from NADH and succinate to molecular oxygen, creating an electrochemical gradient over the inner membrane that drives transmembrane transport and the ATP synthase. The cytochrome b-c1 complex catalyzes electron transfer from ubiquinol to cytochrome c, linking this redox reaction to translocation of protons across the mitochondrial inner membrane, with protons being carried across the membrane as hydrogens on the quinol. In the process called Q cycle, 2 protons are consumed from the matrix, 4 protons are released into the intermembrane space and 2 electrons are passed to cytochrome c. The Rieske protein is a catalytic core subunit containing a [2Fe-2S] iron-sulfur cluster. It cycles between 2 conformational states during catalysis to transfer electrons from the quinol bound in the Q(0) site in cytochrome b to cytochrome c1. The protein is Cytochrome b-c1 complex subunit Rieske, mitochondrial (rip1) of Schizosaccharomyces pombe (strain 972 / ATCC 24843) (Fission yeast).